The chain runs to 210 residues: Rho-related GTP-binding protein RhoD (210 aa).

G24–T31 provides a ligand contact to GTP. Residues Y46–Y54 carry the Effector region motif. Residues D71–Q75 and C129–D132 each bind GTP. Residue C207 is modified to Cysteine methyl ester. A lipid anchor (S-geranylgeranyl cysteine) is attached at C207. Residues L208–T210 constitute a propeptide, removed in mature form.

The protein belongs to the small GTPase superfamily. Rho family. As to quaternary structure, interacts with PAK5. Interacts (in GTP-bound form) with DAPK3, FILIP1 and WHAMM. Interacts (independent of GTP-loaded status) with ANKFY1. In terms of tissue distribution, widely expressed.

The protein resides in the cell membrane. The protein localises to the early endosome. Functionally, involved in endosome dynamics. May coordinate membrane transport with the function of the cytoskeleton. Involved in the internalization and trafficking of activated tyrosine kinase receptors such as PDGFRB. Participates in the reorganization of actin cytoskeleton; the function seems to involve WHAMM and includes regulation of filopodia formation and actin filament bundling. Can modulate the effect of DAPK3 in reorganization of actin cytoskeleton and focal adhesion dissolution. The protein is Rho-related GTP-binding protein RhoD (Rhod) of Mus musculus (Mouse).